The primary structure comprises 300 residues: MKVLKVKVPATTANLGAGFDTLGLALTLYNEFIVEEHDGVVIETEPKNEFLEIPENNLFIQVIKYACERRGKTFHGAKLKQINRVPVARGLGSSATAIVGAIVVSSAVSKTELTDDIFFDIAYRFEPHPDNLIPAWKGGFITALKDREKTYYNSIDFPEDIKAVVVIPEFELSTEKARSVLPERIPLRDGIFNVQRVSLFLSALQNRRYDLLRVAMEDRFHQPYRKKLIPNFDRVVQNGYDAGALGVSLSGAGSAILALADRNFEEIGKAMTEGFSEAGIRSEYKILDIDREGANLEILE.

86-96 serves as a coordination point for ATP; the sequence is PVARGLGSSAT.

Belongs to the GHMP kinase family. Homoserine kinase subfamily.

The protein localises to the cytoplasm. The enzyme catalyses L-homoserine + ATP = O-phospho-L-homoserine + ADP + H(+). Its pathway is amino-acid biosynthesis; L-threonine biosynthesis; L-threonine from L-aspartate: step 4/5. Its function is as follows. Catalyzes the ATP-dependent phosphorylation of L-homoserine to L-homoserine phosphate. The sequence is that of Homoserine kinase from Persephonella marina (strain DSM 14350 / EX-H1).